Consider the following 324-residue polypeptide: Phospho-N-acetylmuramoyl-pentapeptide-transferase (324 aa).

A run of 10 helical transmembrane segments spans residues V5–I25, G50–M70, I77–L97, L117–A137, L147–S167, L176–W196, V203–H223, V227–L247, L250–L270, and V302–V322.

It belongs to the glycosyltransferase 4 family. MraY subfamily. The cofactor is Mg(2+).

Its subcellular location is the cell membrane. It catalyses the reaction UDP-N-acetyl-alpha-D-muramoyl-L-alanyl-gamma-D-glutamyl-meso-2,6-diaminopimeloyl-D-alanyl-D-alanine + di-trans,octa-cis-undecaprenyl phosphate = di-trans,octa-cis-undecaprenyl diphospho-N-acetyl-alpha-D-muramoyl-L-alanyl-D-glutamyl-meso-2,6-diaminopimeloyl-D-alanyl-D-alanine + UMP. It functions in the pathway cell wall biogenesis; peptidoglycan biosynthesis. Functionally, catalyzes the initial step of the lipid cycle reactions in the biosynthesis of the cell wall peptidoglycan: transfers peptidoglycan precursor phospho-MurNAc-pentapeptide from UDP-MurNAc-pentapeptide onto the lipid carrier undecaprenyl phosphate, yielding undecaprenyl-pyrophosphoryl-MurNAc-pentapeptide, known as lipid I. The sequence is that of Phospho-N-acetylmuramoyl-pentapeptide-transferase from Bacillus subtilis (strain 168).